Consider the following 691-residue polypeptide: UvrABC system protein C (691 aa).

Residues 20 to 97 (STSGVYLWKD…IKKHTPRYNI (78 aa)) form the GIY-YIG domain. Residues 204-239 (DATVARLEKRMKRAVRQEAFEAAARIRDDIQAIRCI) form the UVR domain. The disordered stretch occupies residues 662 to 691 (RSTTAPVREEYKEHEHDPQGESPGPGRKTD). Residues 668–680 (VREEYKEHEHDPQ) show a composition bias toward basic and acidic residues.

It belongs to the UvrC family. As to quaternary structure, interacts with UvrB in an incision complex.

It localises to the cytoplasm. Its function is as follows. The UvrABC repair system catalyzes the recognition and processing of DNA lesions. UvrC both incises the 5' and 3' sides of the lesion. The N-terminal half is responsible for the 3' incision and the C-terminal half is responsible for the 5' incision. The chain is UvrABC system protein C from Treponema pallidum (strain Nichols).